The following is a 264-amino-acid chain: Phosphonates import ATP-binding protein PhnC (264 aa).

Positions 3 to 246 (IRLQEAGLRH…MLDALYANEQ (244 aa)) constitute an ABC transporter domain. 35-42 (GPSGAGKS) contacts ATP.

It belongs to the ABC transporter superfamily. Phosphonates importer (TC 3.A.1.9.1) family. The complex is composed of two ATP-binding proteins (PhnC), two transmembrane proteins (PhnE) and a solute-binding protein (PhnD).

Its subcellular location is the cell inner membrane. The catalysed reaction is phosphonate(out) + ATP + H2O = phosphonate(in) + ADP + phosphate + H(+). In terms of biological role, part of the ABC transporter complex PhnCDE involved in phosphonates import. Responsible for energy coupling to the transport system. The protein is Phosphonates import ATP-binding protein PhnC of Pseudomonas entomophila (strain L48).